A 127-amino-acid chain; its full sequence is Small ribosomal subunit protein uS13 (127 aa).

The interval 95–127 is disordered; that stretch reads GLPVHGQRTSTNARTRKGPRRAAVKKKGGAKKK. Residues 108-127 show a composition bias toward basic residues; that stretch reads RTRKGPRRAAVKKKGGAKKK.

This sequence belongs to the universal ribosomal protein uS13 family. In terms of assembly, part of the 30S ribosomal subunit. Forms a loose heterodimer with protein S19. Forms two bridges to the 50S subunit in the 70S ribosome.

Functionally, located at the top of the head of the 30S subunit, it contacts several helices of the 16S rRNA. In the 70S ribosome it contacts the 23S rRNA (bridge B1a) and protein L5 of the 50S subunit (bridge B1b), connecting the 2 subunits; these bridges are implicated in subunit movement. Contacts the tRNAs in the A and P-sites. The chain is Small ribosomal subunit protein uS13 from Desulfatibacillum aliphaticivorans.